The chain runs to 120 residues: MFLLYEYDIFWAFLIISSAIPVLAFLISGVLSPIRKGPEKLSSYESGIEPIGDAWLQFRIRYYMFALVFVVFDVETVFLYPWAMSFDVLGVSAFLEAFIFVLILILGLVYAWRKGALEWS.

3 helical membrane-spanning segments follow: residues 9-29 (IFWA…LISG), 64-84 (MFAL…PWAM), and 88-108 (VLGV…ILGL).

Belongs to the complex I subunit 3 family. In terms of assembly, NDH is composed of at least 16 different subunits, 5 of which are encoded in the nucleus.

The protein localises to the plastid. It localises to the chloroplast thylakoid membrane. The enzyme catalyses a plastoquinone + NADH + (n+1) H(+)(in) = a plastoquinol + NAD(+) + n H(+)(out). It carries out the reaction a plastoquinone + NADPH + (n+1) H(+)(in) = a plastoquinol + NADP(+) + n H(+)(out). Its function is as follows. NDH shuttles electrons from NAD(P)H:plastoquinone, via FMN and iron-sulfur (Fe-S) centers, to quinones in the photosynthetic chain and possibly in a chloroplast respiratory chain. The immediate electron acceptor for the enzyme in this species is believed to be plastoquinone. Couples the redox reaction to proton translocation, and thus conserves the redox energy in a proton gradient. This Draba nemorosa (Woodland whitlowgrass) protein is NAD(P)H-quinone oxidoreductase subunit 3, chloroplastic.